An 85-amino-acid polypeptide reads, in one-letter code: Anti-neuroexcitation peptide 2 (85 aa).

The signal sequence occupies residues 1 to 21 (MKLSLLLVISASMLIDGLVNA). Residues 22 to 82 (DGYIRGSNGC…TWKSESNTCG (61 aa)) form the LCN-type CS-alpha/beta domain. Intrachain disulfides connect Cys-31-Cys-81, Cys-35-Cys-56, Cys-42-Cys-63, and Cys-46-Cys-65.

Belongs to the long (4 C-C) scorpion toxin superfamily. Sodium channel inhibitor family. Beta subfamily. As to expression, expressed by the venom gland.

The protein localises to the secreted. Functionally, binds to sodium channels (Nav) and inhibits them. Recombinant ANEP delays the convulsion seizure of insect models by 18% and shows anti-neuroexcitatory activity. The sequence is that of Anti-neuroexcitation peptide 2 from Olivierus martensii (Manchurian scorpion).